A 247-amino-acid polypeptide reads, in one-letter code: Acidic 27 kDa endochitinase (247 aa).

The N-terminal stretch at M1–A16 is a signal peptide. Catalysis depends on E84, which acts as the Proton donor. C206 and C238 are joined by a disulfide.

It belongs to the glycosyl hydrolase 19 family. Chitinase class II subfamily.

It is found in the secreted. Its subcellular location is the extracellular space. The enzyme catalyses Random endo-hydrolysis of N-acetyl-beta-D-glucosaminide (1-&gt;4)-beta-linkages in chitin and chitodextrins.. In terms of biological role, defense against chitin-containing fungal pathogens. The polypeptide is Acidic 27 kDa endochitinase (CHI17) (Solanum lycopersicum (Tomato)).